The following is a 594-amino-acid chain: Chondroitin sulfate proteoglycan 5 (594 aa).

A compositionally biased stretch (polar residues) spans 1-12 (MGVGGTSASDTA). Residues 1-18 (MGVGGTSASDTALSLCPT) form the signal peptide. Disordered stretches follow at residues 1-325 (MGVG…PWGL) and 343-418 (TTSF…SECR). Residues 19–481 (APEWPPRNGS…AIVTDFQVLC (463 aa)) lie on the Extracellular side of the membrane. Asn26 and Asn44 each carry an N-linked (GlcNAc...) asparagine glycan. Residues 140-181 (SPGLGLSSPGPNLGLPSLDLPNPNLGLPDPNLGLPNPSLGLP) are compositionally biased toward low complexity. 2 stretches are compositionally biased toward pro residues: residues 182 to 195 (SPGP…PNPN) and 219 to 229 (IPLPSPSPGPG). Residues 248–259 (PQPSSSPAPAQR) show a composition bias toward low complexity. Positions 298-310 (GGHGPGGGHGAGG) are enriched in gly residues. Positions 338–377 (ADFYPTTSFYAEGDDDAEEELEEDEEEEEEEDGGLEDENG) are interaction with TNC and TNR. The span at 349–375 (EGDDDAEEELEEDEEEEEEEDGGLEDE) shows a compositional bias: acidic residues. N-linked (GlcNAc...) asparagine glycans are attached at residues Asn413 and Asn425. The 43-residue stretch at 429 to 471 (RSVCDLVPSYCHNGGQCYLVESHGAFCRCNTQDYTWHKGTRCE) folds into the EGF-like domain. 3 cysteine pairs are disulfide-bonded: Cys432-Cys445, Cys439-Cys455, and Cys457-Cys470. The chain crosses the membrane as a helical span at residues 482–502 (VAVGSAALVLLLLFMLTVFFA). The Cytoplasmic portion of the chain corresponds to 503-594 (KKLYLLKTEN…GVPCLHNNLG (92 aa)). A disordered region spans residues 535–594 (TIAEGSHPNDDPGAPHKLQDPLKPGLKDEEPLSILSTAPEEGSKGEPGGCGVPCLHNNLG). Over residues 541 to 564 (HPNDDPGAPHKLQDPLKPGLKDEE) the composition is skewed to basic and acidic residues.

In terms of assembly, binds TNC and TNR. The 80 kDa form but not the 140 kDa form can bind TNC and TNR when expressed at the cell surface. Post-translationally, different forms exist: the 140 kDa form (also reported as 130 kDa), which probably consists of the entire protein, and the 38 and 80 kDa forms, which are probably cleaved in their N-terminus. Increase in synaptic activity, results in shedding of the extracellular domain and expression at the cell surface of a 38 kDa form. A form of 200 kDa has also been reported, which is probably hyperglycosylated. In terms of processing, N-glycosylated. O-glycosylated; contains chondroitin sulfate glycans. Part-time proteoglycan, the 200 kDa form is the only one containing chondroitin sulfate glycans. In terms of tissue distribution, expressed in astroglial and neuronal surfaces in different parts of the embryonic brain. Expressed in adult brain and retina (at protein level).

It localises to the cell membrane. In terms of biological role, may function as a growth and differentiation factor involved in neuritogenesis and more particularly in neurite extension. The chain is Chondroitin sulfate proteoglycan 5 (CSPG5) from Gallus gallus (Chicken).